Consider the following 399-residue polypeptide: S-adenosylmethionine synthase (399 aa).

Histidine 17 is an ATP binding site. Mg(2+) is bound at residue aspartate 19. Glutamate 45 provides a ligand contact to K(+). Residues glutamate 58 and glutamine 101 each coordinate L-methionine. A flexible loop region spans residues 101-111; the sequence is QSPDIAQGVDE. ATP contacts are provided by residues 177 to 179, 244 to 245, aspartate 253, 259 to 260, alanine 276, and lysine 280; these read DAK, RF, and RK. Aspartate 253 lines the L-methionine pocket. Lysine 284 contacts L-methionine.

Belongs to the AdoMet synthase family. In terms of assembly, homotetramer; dimer of dimers. It depends on Mg(2+) as a cofactor. Requires K(+) as cofactor.

It localises to the cytoplasm. It catalyses the reaction L-methionine + ATP + H2O = S-adenosyl-L-methionine + phosphate + diphosphate. Its pathway is amino-acid biosynthesis; S-adenosyl-L-methionine biosynthesis; S-adenosyl-L-methionine from L-methionine: step 1/1. Its function is as follows. Catalyzes the formation of S-adenosylmethionine (AdoMet) from methionine and ATP. The overall synthetic reaction is composed of two sequential steps, AdoMet formation and the subsequent tripolyphosphate hydrolysis which occurs prior to release of AdoMet from the enzyme. The sequence is that of S-adenosylmethionine synthase from Listeria monocytogenes serovar 1/2a (strain ATCC BAA-679 / EGD-e).